A 271-amino-acid chain; its full sequence is 5'-AMP-activated protein kinase subunit beta-2 (271 aa).

Residues 1–46 form a disordered region; the sequence is MGNTTSERVSGERHGAKAARAEGGGHGPGKEHKIMVGSTDDPSVFS. S38 bears the Phosphoserine; by ULK1 mark. T39 carries the post-translational modification Phosphothreonine; by ULK1. The residue at position 68 (S68) is a Phosphoserine; by ULK1. Phosphoserine occurs at positions 94 and 107. T147 is modified (phosphothreonine). Phosphoserine occurs at positions 157, 169, 173, and 183.

The protein belongs to the 5'-AMP-activated protein kinase beta subunit family. In terms of assembly, AMPK is a heterotrimer of an alpha catalytic subunit (PRKAA1 or PRKAA2), a beta (PRKAB1 or PRKAB2) and a gamma non-catalytic subunits (PRKAG1, PRKAG2 or PRKAG3). Post-translationally, phosphorylated when associated with the catalytic subunit (PRKAA1 or PRKAA2). Phosphorylated by ULK1 and ULK2; leading to negatively regulate AMPK activity and suggesting the existence of a regulatory feedback loop between ULK1, ULK2 and AMPK.

Its function is as follows. Non-catalytic subunit of AMP-activated protein kinase (AMPK), an energy sensor protein kinase that plays a key role in regulating cellular energy metabolism. In response to reduction of intracellular ATP levels, AMPK activates energy-producing pathways and inhibits energy-consuming processes: inhibits protein, carbohydrate and lipid biosynthesis, as well as cell growth and proliferation. AMPK acts via direct phosphorylation of metabolic enzymes, and by longer-term effects via phosphorylation of transcription regulators. Also acts as a regulator of cellular polarity by remodeling the actin cytoskeleton; probably by indirectly activating myosin. Beta non-catalytic subunit acts as a scaffold on which the AMPK complex assembles, via its C-terminus that bridges alpha (PRKAA1 or PRKAA2) and gamma subunits (PRKAG1, PRKAG2 or PRKAG3). The chain is 5'-AMP-activated protein kinase subunit beta-2 (Prkab2) from Mus musculus (Mouse).